The sequence spans 304 residues: MARAEGDSWDVASSVGATAAMVAAGRAVATRDPRGLIDDPYAAPLVRAVGIEFFTKVADGEFDITELDPSSAAEMQARIDEMALRTRFFDDYFLASTAGGIRQVVILASGLDSRAYRLPWPDGTVVYEIDQPAVIDFKTSILAGIGAEPTAERRTVAIDLREDWPAALRVAGFDSAAPTAWCAEGLLIYLPPEAQDLLFDNVTALSAAGSTVATEYVPGILNFDAEKARAASAQMRERGLDLDMPSLVYHGERKHVMEYLTSLGWTMAGLPRTDLFAKHGVPMVAHDNDPLGEIVYVSGTYQNR.

Residues Asp130 and 159-160 contribute to the S-adenosyl-L-methionine site; that span reads DL.

It belongs to the UPF0677 family.

Its function is as follows. Exhibits S-adenosyl-L-methionine-dependent methyltransferase activity. This chain is Putative S-adenosyl-L-methionine-dependent methyltransferase Mmcs_1043, found in Mycobacterium sp. (strain MCS).